A 485-amino-acid polypeptide reads, in one-letter code: Glutamyl-tRNA(Gln) amidotransferase subunit A (485 aa).

Residues Lys-78 and Ser-153 each act as charge relay system in the active site. Ser-177 serves as the catalytic Acyl-ester intermediate.

This sequence belongs to the amidase family. GatA subfamily. In terms of assembly, heterotrimer of A, B and C subunits.

The enzyme catalyses L-glutamyl-tRNA(Gln) + L-glutamine + ATP + H2O = L-glutaminyl-tRNA(Gln) + L-glutamate + ADP + phosphate + H(+). Allows the formation of correctly charged Gln-tRNA(Gln) through the transamidation of misacylated Glu-tRNA(Gln) in organisms which lack glutaminyl-tRNA synthetase. The reaction takes place in the presence of glutamine and ATP through an activated gamma-phospho-Glu-tRNA(Gln). This chain is Glutamyl-tRNA(Gln) amidotransferase subunit A, found in Pelobacter propionicus (strain DSM 2379 / NBRC 103807 / OttBd1).